Consider the following 373-residue polypeptide: DNA dC-&gt;dU-editing enzyme APOBEC-3F (373 aa).

2 consecutive CMP/dCMP-type deaminase domains span residues 29–137 and 174–321; these read RRNT…LCRL and DDNY…LRSL. Lys-52 participates in a covalent cross-link: (Microbial infection) Glycyl lysine isopeptide (Lys-Gly) (interchain with G-Cter in ubiquitin). Residues His-65, Cys-96, and Cys-99 each contribute to the Zn(2+) site. A (Microbial infection) Glycyl lysine isopeptide (Lys-Gly) (interchain with G-Cter in ubiquitin) cross-link involves residue Lys-234. Residue His-249 coordinates Zn(2+). The active-site Proton donor is the Glu-251. Zn(2+) contacts are provided by Cys-280 and Cys-283. Cys-280 and Cys-283 are oxidised to a cystine. (Microbial infection) Glycyl lysine isopeptide (Lys-Gly) (interchain with G-Cter in ubiquitin) cross-links involve residues Lys-334, Lys-352, Lys-355, and Lys-358.

It belongs to the cytidine and deoxycytidylate deaminase family. Homodimer. Interacts with APOBEC3G in an RNA-dependent manner. Interacts with AGO1, AGO2 and AGO3. As to quaternary structure, (Microbial infection) Interacts with HIV-1 Vif, leading to its ubiquitination and degradation by the proteasome. In the absence of Vif protein, specifically packaged into HIV-1 virions. It depends on Zn(2+) as a cofactor. In terms of processing, (Microbial infection) Following infection by HIV-1, ubiquitinated by a cullin-5-RING E3 ubiquitin-protein ligase complex (ECS complex) hijacked by the HIV-1 Vif protein, leading to its degradation. As to expression, widely expressed. Highly expressed in ovary.

The protein localises to the cytoplasm. Its subcellular location is the P-body. The catalysed reaction is a 2'-deoxycytidine in single-stranded DNA + H2O + H(+) = a 2'-deoxyuridine in single-stranded DNA + NH4(+). Its activity is regulated as follows. (Microbial infection) Antiviral activity is neutralized by the HIV-1 virion infectivity factor (Vif), that prevents its incorporation into progeny virions by both inhibiting its translation and/or by inducing its ubiquitination and subsequent degradation by the 26S proteasome. Its function is as follows. DNA deaminase (cytidine deaminase) which acts as an inhibitor of retrovirus replication and retrotransposon mobility via deaminase-dependent and -independent mechanisms. Exhibits antiviral activity against viruse such as HIV-1 or HIV-2. After the penetration of retroviral nucleocapsids into target cells of infection and the initiation of reverse transcription, it can induce the conversion of cytosine to uracil in the minus-sense single-strand viral DNA, leading to G-to-A hypermutations in the subsequent plus-strand viral DNA. The resultant detrimental levels of mutations in the proviral genome, along with a deamination-independent mechanism that works prior to the proviral integration, together exert efficient antiretroviral effects in infected target cells. Selectively targets single-stranded DNA and does not deaminate double-stranded DNA or single- or double-stranded RNA. Exhibits antiviral activity also against hepatitis B virus (HBV), equine infectious anemia virus (EIAV), xenotropic MuLV-related virus (XMRV) and simian foamy virus (SFV) and may inhibit the mobility of LTR and non-LTR retrotransposons. May also play a role in the epigenetic regulation of gene expression through the process of active DNA demethylation. This is DNA dC-&gt;dU-editing enzyme APOBEC-3F from Homo sapiens (Human).